A 126-amino-acid polypeptide reads, in one-letter code: MGTLEIKGASLSQFSTGTAQSPWLPLHLWILCSLLAFLPLLVFIGAADCGLIASLLAIYPSWLSARFSVLLFPHWPESCSTKNTARSGALHKPAEQKLRFAQKPCHGNYTVTPCGLLHWIQSPGQL.

Residues 24 to 44 (LPLHLWILCSLLAFLPLLVFI) form a helical membrane-spanning segment.

As to quaternary structure, interacts with host CAMLG; this interaction allows efficient apoptosis inhibition. Additionally, interacts with vGPCR/ORF74 and induces its proteasomeal degradation.

The protein localises to the host membrane. The protein resides in the host mitochondrion. Its function is as follows. Plays a role in the inhibition of host apoptosis to allow completion of the viral lytic replication and may thus favor the maintenance of persistent infection in infected host. The protein is Protein K7 (K7) of Homo sapiens (Human).